The primary structure comprises 116 residues: NADH-ubiquinone oxidoreductase chain 3 (116 aa).

The next 3 membrane-spanning stretches (helical) occupy residues 4-24 (LIIT…IAFW), 56-76 (FFLV…LLPL), and 88-108 (TLIL…YEWI).

Belongs to the complex I subunit 3 family. Core subunit of respiratory chain NADH dehydrogenase (Complex I) which is composed of 45 different subunits. Interacts with TMEM186. Interacts with TMEM242.

Its subcellular location is the mitochondrion inner membrane. The enzyme catalyses a ubiquinone + NADH + 5 H(+)(in) = a ubiquinol + NAD(+) + 4 H(+)(out). Its function is as follows. Core subunit of the mitochondrial membrane respiratory chain NADH dehydrogenase (Complex I) which catalyzes electron transfer from NADH through the respiratory chain, using ubiquinone as an electron acceptor. Essential for the catalytic activity of complex I. This is NADH-ubiquinone oxidoreductase chain 3 from Didelphis virginiana (North American opossum).